The sequence spans 412 residues: Argininosuccinate synthase (412 aa).

ATP contacts are provided by residues 10–18 (AYSGGLDTS) and Ala36. Tyr87 and Ser92 together coordinate L-citrulline. 115-123 (SHGATGKGN) provides a ligand contact to ATP. Residues Thr119, Asn123, and Asp124 each contribute to the L-aspartate site. Residue Asn123 coordinates L-citrulline. Residues Arg127, Ser180, Ser189, Glu270, and Tyr282 each contribute to the L-citrulline site.

This sequence belongs to the argininosuccinate synthase family. As to quaternary structure, homotetramer.

It catalyses the reaction L-citrulline + L-aspartate + ATP = 2-(N(omega)-L-arginino)succinate + AMP + diphosphate + H(+). It functions in the pathway amino-acid biosynthesis; L-arginine biosynthesis; L-arginine from L-ornithine and carbamoyl phosphate: step 2/3. Its pathway is nitrogen metabolism; urea cycle; (N(omega)-L-arginino)succinate from L-aspartate and L-citrulline: step 1/1. This Aedes aegypti (Yellowfever mosquito) protein is Argininosuccinate synthase.